We begin with the raw amino-acid sequence, 50 residues long: Thrombin-like enzyme BpirSP41 (50 aa).

Positions 1–50 (VVGGDECDINEHPFLAFLYSHGYFCGLTLINQEWVLTAAHCDRRFMRIYL) constitute a Peptidase S1 domain. Cysteines 25 and 41 form a disulfide. H40 (charge relay system) is an active-site residue.

Belongs to the peptidase S1 family. Snake venom subfamily. In terms of assembly, monomer. In terms of processing, N-glycosylated. Expressed by the venom gland.

It is found in the secreted. Its activity is regulated as follows. Inhibited by serine protease inhibitors PMSF, benzamidine, leupeptin and aprotinin, as well as by copper ions (Cu2+). Not inhibited by metalloprotease inhibitors EDTA, EGTA and 1,10-phenanthroline, as well as by barium (Ba2+) and calcium ion (Ca2+). Snake venom serine protease that interferes with the hemostatic system of the prey. It almost completely degrades both Aalpha (FGA) and Bbeta (FGB) chains of fibrinogen. It presents a higher ability to degrade fibrin clots than BpirSP27. It hydrolyzes chromogenic substrates S-2238 (used for testing thrombin activity), S-2222 (factor Xa), S-2266 (glandular kallikrein and factor XIa), and S-2302 (plasma kallikrein, factor XIa and XIIa). It shows a decrease in the clotting time of human plasma in the presence of increasing doses of the enzyme. Its minimum coagulant dose (MCD) is 20 ug. It promotes platelet aggregation with a maximum of aggregation of 20%, regardless of the concentration increase or the presence of calcium. It also shows 40% inhibition of the hemolytic activity promoted by the complement pathways and possess only a minor role in the induction of edema and pain in rat. This Bothrops pirajai (Piraja's lancehead) protein is Thrombin-like enzyme BpirSP41.